The chain runs to 405 residues: MTKIYSSIAVKKGLFTLFLLFIYVLGSRIILPFVDLNTKDFLGGSTAYLAFSAALTGGNLRSLSIFSVGLSPWMSAMILWQMFSYSKKLGLSSTAIEIQDRRRMYLTLMIAVIQSLAVSLRLPVQSSYSAILVVLMNTILLIAGTFFLVWLSDLNASMGIGGSIVILLSSMVLNIPQDVLETFQTVHIPTGIIVLLALLTLVFSYLLALMYRARYLVPVNKIGLHNRFKRYSYLEIMLNPAGGMPYMYVMSFLSVPAYLFILLGFIFPNHSGLAALSKEFMIGKPLWVYVYISVLFLFSIIFAFVTMNGEEIADRMKKSGEYIYGIYPGADTSLFINRLVLRFSVIGGLFNVVMAGGPMLFVLFDEKLLRLAMIPGLFMMFGGMIFTIRDEVKALRLNETYKPLI.

A run of 10 helical transmembrane segments spans residues 14 to 34 (LFTL…LPFV), 63 to 83 (LSIF…WQMF), 104 to 124 (MYLT…RLPV), 131 to 151 (ILVV…LVWL), 156 to 176 (ASMG…LNIP), 191 to 211 (GIIV…ALMY), 247 to 267 (MYVM…GFIF), 285 to 305 (PLWV…FAFV), 343 to 363 (FSVI…LFVL), and 368 to 388 (LLRL…IFTI).

Belongs to the SecY/SEC61-alpha family. SecY2 subfamily. As to quaternary structure, component of the accessory SecA2/SecY2 protein translocase complex required to export cell wall proteins. May form heterotrimers with SecE and SecG subunits.

The protein localises to the cell membrane. Its function is as follows. Part of the accessory SecA2/SecY2 system specifically required for export of possible cell wall proteins. The central subunit of a protein translocation channel. The polypeptide is Accessory Sec system protein translocase subunit SecY2 (Streptococcus pneumoniae (strain CGSP14)).